Consider the following 535-residue polypeptide: 4-hydroxy-3-methylbut-2-enyl diphosphate reductase, apicoplast (535 aa).

A [4Fe-4S] cluster-binding site is contributed by C231. The (2E)-4-hydroxy-3-methylbut-2-enyl diphosphate site is built by H260 and H293. Dimethylallyl diphosphate is bound by residues H260 and H293. Positions 260 and 293 each coordinate isopentenyl diphosphate. Position 315 (C315) interacts with [4Fe-4S] cluster. H343 contacts (2E)-4-hydroxy-3-methylbut-2-enyl diphosphate. Residue H343 participates in dimethylallyl diphosphate binding. H343 contacts isopentenyl diphosphate. The active-site Proton donor is E345. T383 contributes to the (2E)-4-hydroxy-3-methylbut-2-enyl diphosphate binding site. C413 provides a ligand contact to [4Fe-4S] cluster. S441, S442, N443, and S485 together coordinate (2E)-4-hydroxy-3-methylbut-2-enyl diphosphate. Dimethylallyl diphosphate is bound by residues S441, S442, N443, and S485. Residues S441, S442, N443, and S485 each contribute to the isopentenyl diphosphate site.

Belongs to the IspH family. As to quaternary structure, interacts with Fd/ferredoxin. The cofactor is [4Fe-4S] cluster.

Its subcellular location is the plastid. It localises to the apicoplast. It catalyses the reaction dimethylallyl diphosphate + 2 oxidized [2Fe-2S]-[ferredoxin] + H2O = (2E)-4-hydroxy-3-methylbut-2-enyl diphosphate + 2 reduced [2Fe-2S]-[ferredoxin] + 2 H(+). The catalysed reaction is isopentenyl diphosphate + 2 oxidized [2Fe-2S]-[ferredoxin] + H2O = (2E)-4-hydroxy-3-methylbut-2-enyl diphosphate + 2 reduced [2Fe-2S]-[ferredoxin] + 2 H(+). Its pathway is isoprenoid biosynthesis; dimethylallyl diphosphate biosynthesis; dimethylallyl diphosphate from (2E)-4-hydroxy-3-methylbutenyl diphosphate: step 1/1. It functions in the pathway isoprenoid biosynthesis; isopentenyl diphosphate biosynthesis via DXP pathway; isopentenyl diphosphate from 1-deoxy-D-xylulose 5-phosphate: step 6/6. In terms of biological role, catalyzes the conversion of 1-hydroxy-2-methyl-2-(E)-butenyl 4-diphosphate (HMBPP) into a mixture of isopentenyl diphosphate (IPP) and dimethylallyl diphosphate (DMAPP). Acts in the terminal step of the DOXP/MEP pathway for isoprenoid precursor biosynthesis. The chain is 4-hydroxy-3-methylbut-2-enyl diphosphate reductase, apicoplast from Plasmodium falciparum (isolate 3D7).